Consider the following 1230-residue polypeptide: Formin-like protein 14 (1230 aa).

In terms of domain architecture, Phosphatase tensin-type spans 1 to 194 (MSLLSRFFYK…QYVARRNINS (194 aa)). C127 (phosphocysteine intermediate) is an active-site residue. The C2 tensin-type domain occupies 200-339 (ERALSLDCVI…FRAEVLFGEV (140 aa)). Disordered stretches follow at residues 412 to 432 (FNSPDSEEETNTSSAADSSDE), 460 to 822 (HESS…LKPL), and 1187 to 1230 (ENEK…RHRT). Over residues 484-496 (DNPLNLPSDPPSS) the composition is skewed to low complexity. 4 stretches are compositionally biased toward pro residues: residues 503-514 (LPPPPPPPPPPL), 524-535 (SQPPPPPPPPPL), 545-556 (SQPPPPPPPPPL), and 566-575 (SQPPPPPPLP). Residues 579–591 (NRDPLTTLHQPIN) show a composition bias toward polar residues. Composition is skewed to pro residues over residues 592-630 (KTPPPPPPPPPPLPSRSIPPPLAQPPPPRPPPPPPPPPS), 637-649 (PSAPPPPPPPPPS), 660-672 (QPPPPPPPPPPTR), 679-688 (APPPPPPPPT), 699-711 (PSTPPPPPPPPPK), 718-728 (PKPPAPPPLPP), and 735-766 (APPPPPPPPLSKTPAPPPPPLSKTPVPPPPPG). Residues 809–1207 (VPTAAPKKTA…KLEKEAIKEK (399 aa)) enclose the FH2 domain. A compositionally biased stretch (basic and acidic residues) spans 1187 to 1215 (ENEKQAEAEKKKLEKEAIKEKSATKKDGV).

Belongs to the formin-like family. Class-II subfamily.

This chain is Formin-like protein 14 (FH14), found in Arabidopsis thaliana (Mouse-ear cress).